Reading from the N-terminus, the 191-residue chain is MAVKLIVGLGNPGPKYQWTRHNAGFMVLDRLSHLTGITVTRKNFSGLCGEGSWQGDRLILLKPQTFMNLSGRSVAEALRFHKLTVEDLIVIHDDLDIPFGRVKLKAGGGHAGHNGLRSLSQELGSGAFLRVRMGIGRPLHGDVVNYVLSNFSPEEMIGLPRLLDGIVDLLEMLITEGLPKTMSLYNNKELL.

Y16 is a tRNA binding site. Catalysis depends on H21, which acts as the Proton acceptor. Residues F66, N68, and N114 each contribute to the tRNA site.

The protein belongs to the PTH family. Monomer.

Its subcellular location is the cytoplasm. The enzyme catalyses an N-acyl-L-alpha-aminoacyl-tRNA + H2O = an N-acyl-L-amino acid + a tRNA + H(+). Hydrolyzes ribosome-free peptidyl-tRNAs (with 1 or more amino acids incorporated), which drop off the ribosome during protein synthesis, or as a result of ribosome stalling. Its function is as follows. Catalyzes the release of premature peptidyl moieties from peptidyl-tRNA molecules trapped in stalled 50S ribosomal subunits, and thus maintains levels of free tRNAs and 50S ribosomes. The polypeptide is Peptidyl-tRNA hydrolase (Geotalea uraniireducens (strain Rf4) (Geobacter uraniireducens)).